Here is a 94-residue protein sequence, read N- to C-terminus: Large ribosomal subunit protein uL23 (94 aa).

This sequence belongs to the universal ribosomal protein uL23 family. In terms of assembly, part of the 50S ribosomal subunit. Contacts protein L29, and trigger factor when it is bound to the ribosome.

One of the early assembly proteins it binds 23S rRNA. One of the proteins that surrounds the polypeptide exit tunnel on the outside of the ribosome. Forms the main docking site for trigger factor binding to the ribosome. This Dehalococcoides mccartyi (strain ATCC BAA-2100 / JCM 16839 / KCTC 5957 / BAV1) protein is Large ribosomal subunit protein uL23.